Reading from the N-terminus, the 706-residue chain is Polyribonucleotide nucleotidyltransferase (706 aa).

2 residues coordinate Mg(2+): Asp-490 and Asp-496. In terms of domain architecture, KH spans 556–615; the sequence is PRIETMQIPTDKIREVIGSGGKVIREIVEVSGAKVDINDEGIIKIASPNGDSIQKAYDMI. Residues 625–693 enclose the S1 motif domain; that stretch reads GKIYKGKVVK…DRGKVRLAMK (69 aa).

Belongs to the polyribonucleotide nucleotidyltransferase family. It depends on Mg(2+) as a cofactor.

It localises to the cytoplasm. The catalysed reaction is RNA(n+1) + phosphate = RNA(n) + a ribonucleoside 5'-diphosphate. Its function is as follows. Involved in mRNA degradation. Catalyzes the phosphorolysis of single-stranded polyribonucleotides processively in the 3'- to 5'-direction. This Jannaschia sp. (strain CCS1) protein is Polyribonucleotide nucleotidyltransferase.